Reading from the N-terminus, the 60-residue chain is Large ribosomal subunit protein bL32 (60 aa).

The interval 1-60 (MAVQQNKKTPSKRGMHRSHDFLVAPQLSVEQTTGETHMRHHISPNGFYRGRKVLKTKNDE) is disordered. Basic residues predominate over residues 49–60 (RGRKVLKTKNDE).

This sequence belongs to the bacterial ribosomal protein bL32 family.

The chain is Large ribosomal subunit protein bL32 from Herminiimonas arsenicoxydans.